Here is a 406-residue protein sequence, read N- to C-terminus: Arginine decarboxylase (406 aa).

The residue at position 8 (Lys8) is an N6-(pyridoxal phosphate)lysine. Val192–Tyr202 is a binding site for substrate.

It belongs to the Orn/Lys/Arg decarboxylase class-II family. SpeA subfamily. The cofactor is pyridoxal 5'-phosphate. Requires Mg(2+) as cofactor.

The catalysed reaction is L-arginine + H(+) = agmatine + CO2. The protein operates within amine and polyamine biosynthesis; agmatine biosynthesis; agmatine from L-arginine: step 1/1. The polypeptide is Arginine decarboxylase (SPE2) (Theobroma cacao (Cacao)).